The primary structure comprises 347 residues: MDNLQTLFDHLYQGKPLTREQMAQVFSTIIQGDMQPATMAGMLVALKMRGETIDEIAGAADALRQAAKPFPRSDASKQSGIVDIVGTGGDGHNTINISTTAAFVAAAAGAKVAKHGNRSVSSKSGSSDLLSHCGIALTMAPDAASQCLDKLGLCFLFAPHYHGGVKHAVPVRQALKTRTIFNVLGPLINPASPEFMLLGVYTLELIEPIAQVLHALGVKRAMVVYGSGLDEVALHDNTHVAELKDGVVRTYQLSPEDLGVNRADIAQLTGGEPADNALITQAILQGKGLPAHRDAVAINAGCALYISGICDSVQAGTQLALATLASGTAFTLLTDLAAASQAGEHNE.

Residues glycine 86, 89–90 (GD), threonine 94, 96–99 (NIST), 114–122 (KHGNRSVSS), and serine 126 contribute to the 5-phospho-alpha-D-ribose 1-diphosphate site. Position 86 (glycine 86) interacts with anthranilate. Serine 98 is a Mg(2+) binding site. Anthranilate is bound at residue asparagine 117. Arginine 172 is a binding site for anthranilate. Mg(2+)-binding residues include aspartate 230 and glutamate 231.

The protein belongs to the anthranilate phosphoribosyltransferase family. In terms of assembly, homodimer. It depends on Mg(2+) as a cofactor.

The enzyme catalyses N-(5-phospho-beta-D-ribosyl)anthranilate + diphosphate = 5-phospho-alpha-D-ribose 1-diphosphate + anthranilate. The protein operates within amino-acid biosynthesis; L-tryptophan biosynthesis; L-tryptophan from chorismate: step 2/5. Functionally, catalyzes the transfer of the phosphoribosyl group of 5-phosphorylribose-1-pyrophosphate (PRPP) to anthranilate to yield N-(5'-phosphoribosyl)-anthranilate (PRA). In Shewanella frigidimarina (strain NCIMB 400), this protein is Anthranilate phosphoribosyltransferase.